A 497-amino-acid chain; its full sequence is Ammonium transporter Rh type C (497 aa).

Residues 1–9 (MAWNTNLRG) lie on the Cytoplasmic side of the membrane. Residues 10 to 30 (RLPITCLILQVTMVVLFGVFV) traverse the membrane as a helical segment. At 31-61 (RYDIQADAHWWLEKKRKNISSDVENEFYYRY) the chain is on the extracellular side. Residue asparagine 48 is glycosylated (N-linked (GlcNAc...) asparagine). Residues 62–82 (PSFEDVHAMVFVGFGFLMTYL) traverse the membrane as a helical segment. At 83-93 (QRYGFSAVGFN) the chain is on the cytoplasmic side. A helical transmembrane segment spans residues 94–114 (FLLAAFGIQWALLMQGWFHFF). Residues 115–125 (EEGHILLSVEN) are Extracellular-facing. The chain crosses the membrane as a helical span at residues 126–145 (LIQADFCVASTCVAFGAVLG). Residues 146–151 (KISPMQ) lie on the Cytoplasmic side of the membrane. Residues 152–174 (LLIMTFFQVTLFTVNEFILLNLI) traverse the membrane as a helical segment. Residues 175 to 179 (EAKDA) lie on the Extracellular side of the membrane. A helical membrane pass occupies residues 180–200 (GGSMTIHTFGAYFGLTVTWIL). The Cytoplasmic segment spans residues 201–219 (YRKNLEQSKQRQSSVYHSD). The helical transmembrane segment at 220 to 240 (LFAMIGTLFLWIYWPSFNSAS) threads the bilayer. Residues 241–251 (SFHGDTQHRAA) lie on the Extracellular side of the membrane. The helical transmembrane segment at 252–272 (LNTYLSLAASVLTTVAVSSVI) threads the bilayer. Over 273–282 (HKKGKLDMVH) the chain is Cytoplasmic. Residues 283-303 (IQNATLAGGVGVGTAAEMMLT) form a helical membrane-spanning segment. Residue proline 304 is a topological domain, extracellular. A helical transmembrane segment spans residues 305-325 (YGALIVGFFCGILSTLGFAYL). Residues 326–340 (SPFLESRLRIQDTCG) are Cytoplasmic-facing. Residues 341 to 361 (IHNLHGIPGIIGGIVGAVTAA) traverse the membrane as a helical segment. At 362–395 (YSSPDVYGEPGIVHSFGFGGYKADWTKRMQGRSQ) the chain is on the extracellular side. Residues 396 to 416 (IFGLLLSLAMALVGGIIVGFI) traverse the membrane as a helical segment. Over 417-497 (LKLPFWGQAS…ATVTSSSLVH (81 aa)) the chain is Cytoplasmic.

It belongs to the ammonium transporter (TC 2.A.49) family. Rh subfamily. In terms of assembly, homotrimer. In terms of processing, N-glycosylated. In terms of tissue distribution, expressed by connecting tubule cells and intercalated cells of the collecting duct in kidney (at protein level).

It localises to the cell membrane. The protein localises to the apical cell membrane. It carries out the reaction NH4(+)(in) = NH4(+)(out). It catalyses the reaction methylamine(out) = methylamine(in). The catalysed reaction is CO2(out) = CO2(in). In terms of biological role, ammonium transporter involved in the maintenance of acid-base homeostasis. Transports ammonium and its related derivative methylammonium across the plasma membrane of epithelial cells likely contributing to renal transepithelial ammonia transport and ammonia metabolism. Postulated to primarily mediate an electroneutral bidirectional transport of NH3 ammonia species according to a mechanism that implies interaction of an NH4(+) ion with acidic residues of the pore entry followed by dissociation of NH4(+) into NH3 and H(+). As a result NH3 transits through the central pore and is protonated on the extracellular side reforming NH4(+). May act as a CO2 channel providing for renal acid secretion. The chain is Ammonium transporter Rh type C (Rhcg) from Rattus norvegicus (Rat).